The following is a 356-amino-acid chain: S-adenosylmethionine:tRNA ribosyltransferase-isomerase (356 aa).

This sequence belongs to the QueA family. In terms of assembly, monomer.

Its subcellular location is the cytoplasm. It carries out the reaction 7-aminomethyl-7-carbaguanosine(34) in tRNA + S-adenosyl-L-methionine = epoxyqueuosine(34) in tRNA + adenine + L-methionine + 2 H(+). The protein operates within tRNA modification; tRNA-queuosine biosynthesis. Functionally, transfers and isomerizes the ribose moiety from AdoMet to the 7-aminomethyl group of 7-deazaguanine (preQ1-tRNA) to give epoxyqueuosine (oQ-tRNA). This Yersinia pseudotuberculosis serotype O:3 (strain YPIII) protein is S-adenosylmethionine:tRNA ribosyltransferase-isomerase.